The sequence spans 152 residues: Deoxyuridine 5'-triphosphate nucleotidohydrolase (152 aa).

Residues R63–G65, N76, and T80–D82 each bind substrate. A disordered region spans residues L129–G152.

This sequence belongs to the dUTPase family. Requires Mg(2+) as cofactor.

It catalyses the reaction dUTP + H2O = dUMP + diphosphate + H(+). The protein operates within pyrimidine metabolism; dUMP biosynthesis; dUMP from dCTP (dUTP route): step 2/2. Functionally, this enzyme is involved in nucleotide metabolism: it produces dUMP, the immediate precursor of thymidine nucleotides and it decreases the intracellular concentration of dUTP so that uracil cannot be incorporated into DNA. The sequence is that of Deoxyuridine 5'-triphosphate nucleotidohydrolase from Cutibacterium acnes (strain DSM 16379 / KPA171202) (Propionibacterium acnes).